The sequence spans 319 residues: Beta-ketoacyl-[acyl-carrier-protein] synthase III (319 aa).

Catalysis depends on residues Cys-113 and His-246. The ACP-binding stretch occupies residues 247–251 (QANIR). Asn-276 is a catalytic residue.

It belongs to the thiolase-like superfamily. FabH family. In terms of assembly, homodimer.

The protein localises to the cytoplasm. The enzyme catalyses malonyl-[ACP] + acetyl-CoA + H(+) = 3-oxobutanoyl-[ACP] + CO2 + CoA. Its pathway is lipid metabolism; fatty acid biosynthesis. Its function is as follows. Catalyzes the condensation reaction of fatty acid synthesis by the addition to an acyl acceptor of two carbons from malonyl-ACP. Catalyzes the first condensation reaction which initiates fatty acid synthesis and may therefore play a role in governing the total rate of fatty acid production. Possesses both acetoacetyl-ACP synthase and acetyl transacylase activities. Its substrate specificity determines the biosynthesis of branched-chain and/or straight-chain of fatty acids. The protein is Beta-ketoacyl-[acyl-carrier-protein] synthase III of Ehrlichia ruminantium (strain Welgevonden).